Reading from the N-terminus, the 553-residue chain is Chaperonin GroEL (553 aa).

Residues 30–33 (TLGP), lysine 51, 87–91 (DGTTT), glycine 416, and aspartate 496 each bind ATP.

It belongs to the chaperonin (HSP60) family. As to quaternary structure, forms a cylinder of 14 subunits composed of two heptameric rings stacked back-to-back. Interacts with the co-chaperonin GroES.

It is found in the cytoplasm. It carries out the reaction ATP + H2O + a folded polypeptide = ADP + phosphate + an unfolded polypeptide.. Its function is as follows. Together with its co-chaperonin GroES, plays an essential role in assisting protein folding. The GroEL-GroES system forms a nano-cage that allows encapsulation of the non-native substrate proteins and provides a physical environment optimized to promote and accelerate protein folding. This is Chaperonin GroEL from Alkalilimnicola ehrlichii (strain ATCC BAA-1101 / DSM 17681 / MLHE-1).